Here is a 430-residue protein sequence, read N- to C-terminus: Glutamate-1-semialdehyde 2,1-aminomutase 2 (430 aa).

Lys268 is subject to N6-(pyridoxal phosphate)lysine.

The protein belongs to the class-III pyridoxal-phosphate-dependent aminotransferase family. HemL subfamily. Homodimer. Requires pyridoxal 5'-phosphate as cofactor.

The protein resides in the cytoplasm. It catalyses the reaction (S)-4-amino-5-oxopentanoate = 5-aminolevulinate. The protein operates within porphyrin-containing compound metabolism; protoporphyrin-IX biosynthesis; 5-aminolevulinate from L-glutamyl-tRNA(Glu): step 2/2. The polypeptide is Glutamate-1-semialdehyde 2,1-aminomutase 2 (Shouchella clausii (strain KSM-K16) (Alkalihalobacillus clausii)).